Consider the following 377-residue polypeptide: N5-carboxyaminoimidazole ribonucleotide synthase (377 aa).

Residues Arg93, Lys133, 138 to 144 (GYDGKGQ), 175 to 178 (EEFV), Glu183, His206, and 257 to 258 (NE) each bind ATP. Residues 97-287 (KALLDNAGVR…QFENHLRAVC (191 aa)) enclose the ATP-grasp domain.

The protein belongs to the PurK/PurT family. Homodimer.

It catalyses the reaction 5-amino-1-(5-phospho-beta-D-ribosyl)imidazole + hydrogencarbonate + ATP = 5-carboxyamino-1-(5-phospho-D-ribosyl)imidazole + ADP + phosphate + 2 H(+). It participates in purine metabolism; IMP biosynthesis via de novo pathway; 5-amino-1-(5-phospho-D-ribosyl)imidazole-4-carboxylate from 5-amino-1-(5-phospho-D-ribosyl)imidazole (N5-CAIR route): step 1/2. Catalyzes the ATP-dependent conversion of 5-aminoimidazole ribonucleotide (AIR) and HCO(3)(-) to N5-carboxyaminoimidazole ribonucleotide (N5-CAIR). The protein is N5-carboxyaminoimidazole ribonucleotide synthase of Vibrio parahaemolyticus serotype O3:K6 (strain RIMD 2210633).